Here is a 446-residue protein sequence, read N- to C-terminus: Vacuolar cation/proton exchanger 4 (446 aa).

The span at 1 to 16 shows a compositional bias: low complexity; sequence MSSISTESSSNLSLLE. The tract at residues 1–33 is disordered; it reads MSSISTESSSNLSLLENGGGGSDKPTAETSRRV. The Cytoplasmic portion of the chain corresponds to 1-69; the sequence is MSSISTESSS…MRRILTNLQE (69 aa). Residues 70-90 form a helical membrane-spanning segment; it reads VLLGTKLFILFPAVPLAVVAH. The Extracellular segment spans residues 91 to 96; it reads RYDCPR. A helical transmembrane segment spans residues 97–117; the sequence is AWVFALSLLGLTPLAERISFL. Topologically, residues 118–128 are cytoplasmic; it reads TEQIAFHTGPT. Residues 129–149 traverse the membrane as a helical segment; sequence VGGLMNATCGNATEMIIAILA. The cation selection stretch occupies residues 138 to 173; that stretch reads GNATEMIIAILAVGQRKMRIVKLSLLGSILSNLLFV. The Extracellular portion of the chain corresponds to 150–162; the sequence is VGQRKMRIVKLSL. The chain crosses the membrane as a helical span at residues 163 to 183; that stretch reads LGSILSNLLFVLGTSLFLGGI. Over 184–196 the chain is Cytoplasmic; sequence SNLRKHQSFDPRQ. The helical transmembrane segment at 197–217 threads the bilayer; it reads GDMNSMLLYLALLCQTLPMIM. Residues 218–238 are Extracellular-facing; it reads RFTMEAEEYDGSDVVVLSRAS. The helical transmembrane segment at 239 to 259 threads the bilayer; it reads SFVMLIAYLAFLIFHLFSSHL. The Cytoplasmic portion of the chain corresponds to 260–285; that stretch reads SPPPPPLPQREDVHDDDVSDKEEEGA. The helical transmembrane segment at 286 to 306 threads the bilayer; it reads VIGMWSAIFWLIIMTLLVALL. The Extracellular segment spans residues 307–319; sequence SDYLVSTIQDAAD. The chain crosses the membrane as a helical span at residues 320–340; it reads SWGLSVGFIGIILLPIVGNAA. The interval 337-372 is cation selection; it reads GNAAEHAGAVIFAFRNKLDITLGIALGSATQIALFV. Over 341–359 the chain is Cytoplasmic; that stretch reads EHAGAVIFAFRNKLDITLG. A helical membrane pass occupies residues 360-380; it reads IALGSATQIALFVVPVTVLVA. Residues 381–388 are Extracellular-facing; the sequence is WTMGIEMD. Residues 389 to 409 form a helical membrane-spanning segment; that stretch reads LNFNLLETACFALSILVTSLV. The Cytoplasmic segment spans residues 410 to 416; sequence LQDGTSN. A helical transmembrane segment spans residues 417-437; sequence YMKGLVLLLCYVVIAACFFVS. The Extracellular portion of the chain corresponds to 438–446; that stretch reads NSPSSKLLF.

It belongs to the Ca(2+):cation antiporter (CaCA) (TC 2.A.19) family. Cation/proton exchanger (CAX) subfamily. Expressed at low levels in all tissues.

The protein resides in the vacuole membrane. Functionally, vacuolar cation/proton exchanger (CAX). Translocates Ca(2+) and other metal ions into vacuoles using the proton gradient formed by H(+)-ATPase and H(+)-pyrophosphatase. Cation selectivity transport in tobacco root tonoplast vesicles is Cd(2+)&gt;Zn(2+)&gt;&gt;Ca(2+)&gt;&gt;&gt;Mn(2+). The chain is Vacuolar cation/proton exchanger 4 (CAX4) from Arabidopsis thaliana (Mouse-ear cress).